A 357-amino-acid chain; its full sequence is Protein BMRF2 (357 aa).

Residues 1–11 (MFSCKQHLSLG) are Virion surface-facing. A transmembrane span lies at residues 12–32 (ACVFCLGLLASTPFIWCFVFA). Residues 33–46 (NLLSLEIFSPWQTH) lie on the Intravirion side of the membrane. A membrane pass occupies residues 47–67 (VYRLGFPTACLMAVLWTLVPA). The Virion surface portion of the chain corresponds to 68-70 (KHA). Over 71-91 (VRAVTPAIMLNIASALIFFSL) the chain traverses the membrane. At 92 to 98 (RVYSTST) the chain is on the intravirion side. The hydrophobic stretch at 99 to 121 (WVSAPCLFLANLPLLCLWPRLAI) threads the membrane. Topologically, residues 122-133 (EIVYICPAIHQR) are virion surface. A membrane pass occupies residues 134 to 154 (FFELGLLLACTIFALSVVSRA). Over 155–158 (LEVS) the chain is Intravirion. The hydrophobic stretch at 159 to 179 (AVFMSPFFIFLALGSGSLAGA) threads the membrane. The Virion surface portion of the chain corresponds to 180-217 (RRNQIYTSGLERRRSIFCARGDHSVASLKETLHKCPWD). The short motif at 199 to 201 (RGD) is the Integrin binding site element. A transmembrane span lies at residues 218 to 238 (LLAISALTVLVVCVMIVLHVH). Residues 239-240 (AE) are Intravirion-facing. The hydrophobic stretch at 241–261 (VFFGLSRYLPLFLCGAMASGG) threads the membrane. Residues 262-267 (LYLGHS) lie on the Virion surface side of the membrane. The chain crosses the lipid bilayer at residues 268 to 288 (SIIACVMATLCTLSSVVVYFL). Residues 289-298 (HETLGPLGKT) lie on the Intravirion side of the membrane. The hydrophobic stretch at 299–319 (VLFISIFVYYFSGVAALSAAM) threads the membrane. Residues 320 to 335 (RYKLKKFVNGPLVHLR) lie on the Virion surface side of the membrane. Over 336-356 (VVYMCCFVFTFCEYLLVTFIK) the chain traverses the membrane. Position 357 (Ser357) is a topological domain, intravirion.

It belongs to the herpesviridae BMRF2 family. Interacts with BDLF2. Interacts with host beta1 integrin family. Post-translationally, extensively glycosylated by O-linked oligosaccharides.

It is found in the virion membrane. The protein resides in the host cell membrane. Functionally, facilitates virus attachment to oral epithelial cells by binding to host beta1 integrin family. Participates in rearrangement of cellular actin to increase intercellular contacts by binding BDLF2 and thereby promote virus cell-to-cell spreading. The polypeptide is Protein BMRF2 (Homo sapiens (Human)).